The following is a 225-amino-acid chain: Small ribosomal subunit protein eS1 (225 aa).

This sequence belongs to the eukaryotic ribosomal protein eS1 family.

The protein is Small ribosomal subunit protein eS1 of Methanococcus maripaludis (strain DSM 14266 / JCM 13030 / NBRC 101832 / S2 / LL).